A 190-amino-acid polypeptide reads, in one-letter code: Threonylcarbamoyl-AMP synthase (190 aa).

The region spanning 7 to 190 (LGSIAQAVDV…ALTGERFRQG (184 aa)) is the YrdC-like domain.

This sequence belongs to the SUA5 family. TsaC subfamily.

It is found in the cytoplasm. The catalysed reaction is L-threonine + hydrogencarbonate + ATP = L-threonylcarbamoyladenylate + diphosphate + H2O. Its function is as follows. Required for the formation of a threonylcarbamoyl group on adenosine at position 37 (t(6)A37) in tRNAs that read codons beginning with adenine. Catalyzes the conversion of L-threonine, HCO(3)(-)/CO(2) and ATP to give threonylcarbamoyl-AMP (TC-AMP) as the acyladenylate intermediate, with the release of diphosphate. The protein is Threonylcarbamoyl-AMP synthase of Enterobacter sp. (strain 638).